Here is a 507-residue protein sequence, read N- to C-terminus: Maturase K (507 aa).

This sequence belongs to the intron maturase 2 family. MatK subfamily.

The protein localises to the plastid. The protein resides in the chloroplast. Functionally, usually encoded in the trnK tRNA gene intron. Probably assists in splicing its own and other chloroplast group II introns. In Craterostigma plantagineum (Blue gem), this protein is Maturase K.